The following is a 214-amino-acid chain: Probable transaldolase (214 aa).

The active-site Schiff-base intermediate with substrate is the K83.

It belongs to the transaldolase family. Type 3B subfamily.

It localises to the cytoplasm. It catalyses the reaction D-sedoheptulose 7-phosphate + D-glyceraldehyde 3-phosphate = D-erythrose 4-phosphate + beta-D-fructose 6-phosphate. The protein operates within carbohydrate degradation; pentose phosphate pathway; D-glyceraldehyde 3-phosphate and beta-D-fructose 6-phosphate from D-ribose 5-phosphate and D-xylulose 5-phosphate (non-oxidative stage): step 2/3. Functionally, transaldolase is important for the balance of metabolites in the pentose-phosphate pathway. This is Probable transaldolase from Desulfotalea psychrophila (strain LSv54 / DSM 12343).